A 622-amino-acid polypeptide reads, in one-letter code: FERM domain-containing protein 6 (622 aa).

Positions 16 to 328 (RRVCIFLPND…NSHRLYMNLQ (313 aa)) constitute an FERM domain. A disordered region spans residues 357-452 (LDMDPLEKRS…KDRLEEDSQD (96 aa)). 2 stretches are compositionally biased toward low complexity: residues 384-395 (HSTASHSSSHTS) and 425-438 (SSMT…TSGV). The residue at position 522 (serine 522) is a Phosphoserine. At threonine 523 the chain carries Phosphothreonine. Serine 525, serine 542, and serine 544 each carry phosphoserine.

The protein resides in the cytoplasm. Its subcellular location is the cell membrane. This chain is FERM domain-containing protein 6 (Frmd6), found in Mus musculus (Mouse).